Consider the following 146-residue polypeptide: Large ribosomal subunit protein uL15 (146 aa).

Residues 1 to 13 (MKLHELKPAEGSR) are compositionally biased toward basic and acidic residues. Positions 1-57 (MKLHELKPAEGSRKVRNRVGRGTSSGNGKTSGRGQKGQKARSGVGLRPGFEGGQTPL) are disordered. A compositionally biased stretch (gly residues) spans 23–35 (TSSGNGKTSGRGQ).

This sequence belongs to the universal ribosomal protein uL15 family. As to quaternary structure, part of the 50S ribosomal subunit.

Binds to the 23S rRNA. The polypeptide is Large ribosomal subunit protein uL15 (Streptococcus thermophilus (strain CNRZ 1066)).